A 611-amino-acid chain; its full sequence is Elongation factor 1 alpha-like protein (611 aa).

Disordered stretches follow at residues 1–21 (MAYSDYSDGADDMPDFHDEGE) and 105–138 (SISQQRPNDRLPDWLDEEESEGERNGEEANDEKT). Residue Ser124 is modified to Phosphoserine. Basic and acidic residues predominate over residues 126 to 138 (GERNGEEANDEKT). In terms of domain architecture, tr-type G spans 165 to 390 (LPHLSFVVLG…LENAAFKISK (226 aa)). Residues 174 to 181 (GHVDAGKS) are G1. Position 174-181 (174-181 (GHVDAGKS)) interacts with GTP. Residues 230–234 (GVTVS) form a G2 region. A G3 region spans residues 251–254 (DAPG). Residues 313-316 (NKMD) and 352-354 (SGF) each bind GTP. A G4 region spans residues 313–316 (NKMD). The tract at residues 352–354 (SGF) is G5.

This sequence belongs to the TRAFAC class translation factor GTPase superfamily. Classic translation factor GTPase family. In terms of assembly, component of the Dom34-Hbs1 complex, also named Pelota-HBS1L complex, composed of DOM34 and HBS1.

The protein localises to the cytoplasm. The enzyme catalyses GTP + H2O = GDP + phosphate + H(+). In terms of biological role, GTPase component of the Dom34-Hbs1 complex, a complex that recognizes stalled ribosomes and triggers the No-Go Decay (NGD) pathway. The Dom34-Hbs1 complex recognizes ribosomes stalled at the 3' end of an mRNA and engages stalled ribosomes by destabilizing mRNA in the mRNA channel. Following ribosome-binding, the Pelota-HBS1L complex promotes the disassembly of stalled ribosomes, followed by degradation of damaged mRNAs as part of the NGD pathway. The Dom34-Hbs1 complex is also involved in non-functional rRNA decay. The polypeptide is Elongation factor 1 alpha-like protein (Saccharomyces cerevisiae (strain ATCC 204508 / S288c) (Baker's yeast)).